A 317-amino-acid chain; its full sequence is Ribosomal protein L11 methyltransferase (317 aa).

Residues Thr158, Gly179, Asp201, and Asn244 each contribute to the S-adenosyl-L-methionine site.

This sequence belongs to the methyltransferase superfamily. PrmA family.

It localises to the cytoplasm. It carries out the reaction L-lysyl-[protein] + 3 S-adenosyl-L-methionine = N(6),N(6),N(6)-trimethyl-L-lysyl-[protein] + 3 S-adenosyl-L-homocysteine + 3 H(+). Functionally, methylates ribosomal protein L11. This chain is Ribosomal protein L11 methyltransferase, found in Lactococcus lactis subsp. cremoris (strain SK11).